A 259-amino-acid chain; its full sequence is Transcription factor bHLH80 (259 aa).

Residues 1-25 are disordered; that stretch reads MQSTHISGGSSGGGGGGGGEVSRSG. Residues 9-20 are compositionally biased toward gly residues; it reads GSSGGGGGGGGE. In terms of domain architecture, bHLH spans 187 to 237; it reads CATHPRSIAERVRRTRISDRIRRLQELVPNMDKQTNTADMLEEAVEYVKAL.

Homodimer. In terms of tissue distribution, expressed constitutively in roots, leaves, stems, and flowers.

The protein localises to the nucleus. In Arabidopsis thaliana (Mouse-ear cress), this protein is Transcription factor bHLH80 (BHLH80).